A 307-amino-acid polypeptide reads, in one-letter code: Transaldolase (307 aa).

Catalysis depends on lysine 125, which acts as the Schiff-base intermediate with substrate.

Belongs to the transaldolase family. Type 1 subfamily. Homodimer.

It localises to the cytoplasm. It carries out the reaction D-sedoheptulose 7-phosphate + D-glyceraldehyde 3-phosphate = D-erythrose 4-phosphate + beta-D-fructose 6-phosphate. The protein operates within carbohydrate degradation; pentose phosphate pathway; D-glyceraldehyde 3-phosphate and beta-D-fructose 6-phosphate from D-ribose 5-phosphate and D-xylulose 5-phosphate (non-oxidative stage): step 2/3. Its function is as follows. Transaldolase is important for the balance of metabolites in the pentose-phosphate pathway. The sequence is that of Transaldolase from Pseudomonas aeruginosa (strain LESB58).